Consider the following 326-residue polypeptide: DNA repair protein RAD51 homolog 4 (326 aa).

A preferentially binds ssDNA region spans residues 1-83; it reads MGVLRAGLCP…ELKTSTAILS (83 aa). 107–114 is a binding site for ATP; the sequence is GAPGSGKT.

It belongs to the RecA family. RAD51 subfamily. As to quaternary structure, part of the BCDX2 complex consisting of RAD51B, RAD51C, RAD51D and XRCC2; the complex has a ring-like structure arranged into a flat disc around a central channel. In the absence of DNA, the BCDX2 subcomplex XRCC2:RAD51D formed a multimeric ring structure; in the presence of single-stranded DNA it formed a filamentous structure with the ssDNA. Interacts with SWSAP1 and ZSWIM7; involved in homologous recombination repair. Interacts with BLM; required for stimulation of BLM activity by the BCDX2 subcomplex XRCC2:RAD51D.

The protein localises to the nucleus. Its function is as follows. Involved in the homologous recombination repair (HRR) pathway of double-stranded DNA breaks arising during DNA replication or induced by DNA-damaging agents. Bind to single-stranded DNA (ssDNA) and has DNA-dependent ATPase activity. Part of the RAD51 paralog protein complex BCDX2 which acts in the BRCA1-BRCA2-dependent HR pathway. Upon DNA damage, BCDX2 acts downstream of BRCA2 recruitment and upstream of RAD51 recruitment. BCDX2 binds predominantly to the intersection of the four duplex arms of the Holliday junction and to junction of replication forks. The BCDX2 complex was originally reported to bind single-stranded DNA, single-stranded gaps in duplex DNA and specifically to nicks in duplex DNA. Involved in telomere maintenance. The BCDX2 subcomplex XRCC2:RAD51D can stimulate Holliday junction resolution by BLM. This Bos taurus (Bovine) protein is DNA repair protein RAD51 homolog 4 (RAD51D).